A 444-amino-acid polypeptide reads, in one-letter code: ATP-dependent protease ATPase subunit HslU (444 aa).

Residues isoleucine 18, 60–65, aspartate 256, glutamate 322, and arginine 394 contribute to the ATP site; that span reads GVGKTE.

This sequence belongs to the ClpX chaperone family. HslU subfamily. In terms of assembly, a double ring-shaped homohexamer of HslV is capped on each side by a ring-shaped HslU homohexamer. The assembly of the HslU/HslV complex is dependent on binding of ATP.

The protein localises to the cytoplasm. Functionally, ATPase subunit of a proteasome-like degradation complex; this subunit has chaperone activity. The binding of ATP and its subsequent hydrolysis by HslU are essential for unfolding of protein substrates subsequently hydrolyzed by HslV. HslU recognizes the N-terminal part of its protein substrates and unfolds these before they are guided to HslV for hydrolysis. The protein is ATP-dependent protease ATPase subunit HslU of Klebsiella pneumoniae subsp. pneumoniae (strain ATCC 700721 / MGH 78578).